The sequence spans 506 residues: Spindle pole body protein CSA6 (506 aa).

4 disordered regions span residues 18–121 (SPIK…PNEN), 252–276 (EKHN…VETQ), 329–429 (PSSP…YSIR), and 447–470 (KNDQ…EEKV). The segment covering 38–48 (IDLRDYMDRQK) has biased composition (basic and acidic residues). The span at 50–59 (SRNYSDSEYT) shows a compositional bias: polar residues. Residues 63–72 (IKREKPETKQ) are compositionally biased toward basic and acidic residues. Positions 94–119 (PTKNYSQHVMQERSAPNSPQKKSLPN) are enriched in polar residues. 2 stretches are compositionally biased toward polar residues: residues 330–353 (SSPN…SVNL) and 361–389 (QPSH…NPSP). Basic and acidic residues-rich tracts occupy residues 412 to 422 (EWTREREERDG) and 461 to 470 (TDGKEEEEKV).

It is found in the cytoplasm. It localises to the cytoskeleton. The protein localises to the microtubule organizing center. Its subcellular location is the spindle pole body. Functionally, plays a role in mitotic spindle pole body organization, possibly at the point of spindle pole body separation. Required for mitotic exit. This Candida tropicalis (strain ATCC MYA-3404 / T1) (Yeast) protein is Spindle pole body protein CSA6.